Here is a 120-residue protein sequence, read N- to C-terminus: Natriuretic peptide (120 aa).

The N-terminal stretch at 1 to 25 (MVGLSRLADGGLLLVLALLPLALDG) is a signal peptide. The propeptide occupies 26–70 (KPAPLEKAPMAPARIIPYLRPVGKESRAALDRMVPPEDGDSRRLE). A disulfide bridge links cysteine 81 with cysteine 97. The propeptide occupies 110–120 (ILPYLRPIRKE).

This sequence belongs to the natriuretic peptide family. In terms of tissue distribution, expressed by the venom gland.

The protein resides in the secreted. Functionally, natriuretic peptide that dose-dependently induces the rapid relaxation of rat aortic strips phenylephrine-precontracted. Acts by stimulating cGMP production in a dose-dependent manner (by probably activating NPR1 and/or NPR2). May also show potent hypotensive effects. The chain is Natriuretic peptide from Micrurus altirostris (Uruguayan coral snake).